Consider the following 677-residue polypeptide: DNA ligase (677 aa).

NAD(+) is bound by residues 34–38, 84–85, and glutamate 118; these read DAQYD and SL. The N6-AMP-lysine intermediate role is filled by lysine 120. Residues arginine 141, glutamate 176, lysine 283, and lysine 307 each contribute to the NAD(+) site. Cysteine 403, cysteine 406, cysteine 421, and cysteine 427 together coordinate Zn(2+). In terms of domain architecture, BRCT spans 594–677; sequence ETASPISGKT…DLLKTVSNSE (84 aa).

It belongs to the NAD-dependent DNA ligase family. LigA subfamily. The cofactor is Mg(2+). Requires Mn(2+) as cofactor.

It catalyses the reaction NAD(+) + (deoxyribonucleotide)n-3'-hydroxyl + 5'-phospho-(deoxyribonucleotide)m = (deoxyribonucleotide)n+m + AMP + beta-nicotinamide D-nucleotide.. Functionally, DNA ligase that catalyzes the formation of phosphodiester linkages between 5'-phosphoryl and 3'-hydroxyl groups in double-stranded DNA using NAD as a coenzyme and as the energy source for the reaction. It is essential for DNA replication and repair of damaged DNA. This is DNA ligase from Anaplasma phagocytophilum (strain HZ).